We begin with the raw amino-acid sequence, 858 residues long: Low-density lipoprotein receptor-related protein 12 (858 aa).

The first 32 residues, 1 to 32 (MARRWSTKESQRRGSAWLLLFLAGVYGNGALA), serve as a signal peptide directing secretion. Residues 33–492 (ELSENVHISG…ENCPVIVPTR (460 aa)) are Extracellular-facing. Disulfide bonds link C47/C76, C103/C122, C166/C178, C173/C191, C185/C200, C215/C232, C222/C245, C239/C254, and C259/C285. A CUB 1 domain is found at 47–159 (CGESPEQIRA…KGFRLAYFSG (113 aa)). An N-linked (GlcNAc...) asparagine glycan is attached at N75. 2 consecutive LDL-receptor class A domains span residues 165-201 (DCAC…EVCA) and 214-255 (PCAY…IDCD). The region spanning 259–372 (CGQWLKYFYG…RGFNATYQVD (114 aa)) is the CUB 2 domain. N-linked (GlcNAc...) asparagine glycans are attached at residues N284 and N366. LDL-receptor class A domains follow at residues 374–411 (FCLP…INCT), 412–449 (MCQK…KNCF), and 450–486 (FCQP…ENCP). 9 disulfides stabilise this stretch: C375-C388, C382-C401, C395-C410, C413-C426, C420-C439, C433-C448, C451-C463, C458-C476, and C470-C485. N409 carries N-linked (GlcNAc...) asparagine glycosylation. N441 is a glycosylation site (N-linked (GlcNAc...) asparagine). Residues 493-513 (VITAAVIGSLICGLLLVIALG) form a helical membrane-spanning segment. The Cytoplasmic segment spans residues 514–858 (CTCKLYSLRM…TSDDEALLLC (345 aa)). Disordered stretches follow at residues 619–721 (ALVS…VSPA) and 746–767 (SSST…SGRE). Residues 712–721 (SVEAPSVSPA) show a composition bias toward low complexity. Over residues 746-755 (SSSTTQNRSP) the composition is skewed to polar residues.

Belongs to the LDLR family. In terms of assembly, may interact with RACK1, ZFYVE9 and NMRK2.

The protein localises to the membrane. Its subcellular location is the coated pit. Its function is as follows. Probable receptor, which may be involved in the internalization of lipophilic molecules and/or signal transduction. May act as a tumor suppressor. This Mus musculus (Mouse) protein is Low-density lipoprotein receptor-related protein 12 (Lrp12).